The following is a 417-amino-acid chain: Putative competence-damage inducible protein (417 aa).

This sequence belongs to the CinA family.

The sequence is that of Putative competence-damage inducible protein from Leuconostoc citreum (strain KM20).